Reading from the N-terminus, the 432-residue chain is Transcriptional adapter 3-B (432 aa).

Disordered stretches follow at residues 90-124 and 275-315; these read HELG…PKSR and SPVE…KSLE. Positions 293–305 are enriched in polar residues; the sequence is DGASTSPRSQNKP. The stretch at 335–398 forms a coiled coil; that stretch reads ADDSEDEVLA…NEVMDAFRKI (64 aa).

Belongs to the NGG1 family.

The protein localises to the nucleus. In terms of biological role, functions as a component of the PCAF complex. The PCAF complex is capable of efficiently acetylating histones in a nucleosomal context. The sequence is that of Transcriptional adapter 3-B (tada3-b) from Xenopus laevis (African clawed frog).